The chain runs to 618 residues: Mitochondrial Rho GTPase 2 (618 aa).

Residues 1–592 (MRRDVRILLL…ELHPSSFWLR (592 aa)) are Cytoplasmic-facing. In terms of domain architecture, Miro 1 spans 2–168 (RRDVRILLLG…FYYAQKAVLH (167 aa)). Residues G16, K17, T18, and S19 each coordinate GTP. T18 contacts Mg(2+). Residues P35 and D57 each coordinate Mg(2+). Position 59 (S59) interacts with GTP. K96 participates in a covalent cross-link: Glycyl lysine isopeptide (Lys-Gly) (interchain with G-Cter in ubiquitin). GTP is bound by residues N118, K119, D121, A149, and K150. Residue K119 forms a Glycyl lysine isopeptide (Lys-Gly) (interchain with G-Cter in ubiquitin) linkage. Residue K164 forms a Glycyl lysine isopeptide (Lys-Gly) (interchain with G-Cter in ubiquitin) linkage. EF-hand domains follow at residues 184–219 (ACAQ…CFGH) and 304–339 (LGYQ…FPAA). 8 residues coordinate Ca(2+): D197, D199, D201, E208, D317, D319, D321, and E328. The Miro 2 domain occupies 414–576 (RSVLLCKVVG…FTQLATMAAF (163 aa)). 5 residues coordinate GTP: G426, G428, K429, S430, and A431. GDP is bound by residues G426, G428, K429, S430, and A431. Position 430 (S430) interacts with Mg(2+). E471 serves as a coordination point for Mg(2+). Residues K525, D527, and C556 each coordinate GTP. Positions 525, 527, and 556 each coordinate GDP. A helical; Anchor for type IV membrane protein membrane pass occupies residues 593–615 (GLLGVVGAAVAAVLSFSLYRVLV). Over 616–618 (KSQ) the chain is Mitochondrial intermembrane.

The protein belongs to the mitochondrial Rho GTPase family. Homodimer. Interacts with the kinesin-binding proteins TRAK1/OIP106 and TRAK2/GRIF1, forming a link between mitochondria and the trafficking apparatus of the microtubules. Interacts with ARMCX3. Found in a complex with KIF5B, OGT, RHOT1 and TRAK1. Ubiquitinated by PRKN in a PINK1-dependent manner, leading to its degradation. In terms of tissue distribution, ubiquitously expressed. Highly expressed in heart, liver, skeletal muscle, kidney and pancreas.

The protein resides in the mitochondrion outer membrane. The catalysed reaction is GTP + H2O = GDP + phosphate + H(+). It carries out the reaction ATP + H2O = ADP + phosphate + H(+). It catalyses the reaction UTP + H2O = UDP + phosphate + H(+). In terms of biological role, atypical mitochondrial nucleoside-triphosphatase (NTPase) involved in mitochondrial trafficking. Probably involved in control of anterograde transport of mitochondria and their subcellular distribution. Can hydrolyze GTP. Can hydrolyze ATP and UTP. In Homo sapiens (Human), this protein is Mitochondrial Rho GTPase 2 (RHOT2).